The following is a 189-amino-acid chain: dCTP deaminase (189 aa).

Residues 112-117 (KSTYAR), 136-138 (TLE), Q157, Y171, and Q181 contribute to the dCTP site. E138 serves as the catalytic Proton donor/acceptor.

Belongs to the dCTP deaminase family. In terms of assembly, homotrimer.

It carries out the reaction dCTP + H2O + H(+) = dUTP + NH4(+). It functions in the pathway pyrimidine metabolism; dUMP biosynthesis; dUMP from dCTP (dUTP route): step 1/2. Catalyzes the deamination of dCTP to dUTP. In Paraburkholderia xenovorans (strain LB400), this protein is dCTP deaminase.